Consider the following 576-residue polypeptide: Arginine--tRNA ligase (576 aa).

The short motif at proline 122–histidine 132 is the 'HIGH' region element.

The protein belongs to the class-I aminoacyl-tRNA synthetase family. As to quaternary structure, monomer.

The protein localises to the cytoplasm. The catalysed reaction is tRNA(Arg) + L-arginine + ATP = L-arginyl-tRNA(Arg) + AMP + diphosphate. The protein is Arginine--tRNA ligase of Hamiltonella defensa subsp. Acyrthosiphon pisum (strain 5AT).